A 194-amino-acid polypeptide reads, in one-letter code: Ribonuclease HII (194 aa).

An RNase H type-2 domain is found at 16–194 (CIVAGIDEAG…PYHRRSFRCC (179 aa)). A divalent metal cation contacts are provided by Asp22, Glu23, and Asp113.

Belongs to the RNase HII family. It depends on Mn(2+) as a cofactor. The cofactor is Mg(2+).

It is found in the cytoplasm. It catalyses the reaction Endonucleolytic cleavage to 5'-phosphomonoester.. In terms of biological role, endonuclease that specifically degrades the RNA of RNA-DNA hybrids. In Rickettsia massiliae (strain Mtu5), this protein is Ribonuclease HII.